Consider the following 54-residue polypeptide: Secreted virulence factor MC69 (54 aa).

Positions 1–16 (MKAAFVLALCASLASA) are cleaved as a signal peptide. The cysteines at positions 36 and 46 are disulfide-linked.

It belongs to the MC69 virulence factor family.

Its subcellular location is the secreted. In terms of biological role, secreted protein required for appressorial penetration of intact host epidermal cells and for pathogenicity. The sequence is that of Secreted virulence factor MC69 from Pyricularia oryzae (strain 70-15 / ATCC MYA-4617 / FGSC 8958) (Rice blast fungus).